The chain runs to 225 residues: Biosynthetic peptidoglycan transglycosylase (225 aa).

The chain crosses the membrane as a helical span at residues 8-28 (VLLIFIGAILLIQLWIFSSLV).

It belongs to the glycosyltransferase 51 family.

It is found in the cell inner membrane. It catalyses the reaction [GlcNAc-(1-&gt;4)-Mur2Ac(oyl-L-Ala-gamma-D-Glu-L-Lys-D-Ala-D-Ala)](n)-di-trans,octa-cis-undecaprenyl diphosphate + beta-D-GlcNAc-(1-&gt;4)-Mur2Ac(oyl-L-Ala-gamma-D-Glu-L-Lys-D-Ala-D-Ala)-di-trans,octa-cis-undecaprenyl diphosphate = [GlcNAc-(1-&gt;4)-Mur2Ac(oyl-L-Ala-gamma-D-Glu-L-Lys-D-Ala-D-Ala)](n+1)-di-trans,octa-cis-undecaprenyl diphosphate + di-trans,octa-cis-undecaprenyl diphosphate + H(+). The protein operates within cell wall biogenesis; peptidoglycan biosynthesis. Its function is as follows. Peptidoglycan polymerase that catalyzes glycan chain elongation from lipid-linked precursors. This is Biosynthetic peptidoglycan transglycosylase from Acinetobacter baumannii (strain ACICU).